The chain runs to 338 residues: Tetraacyldisaccharide 4'-kinase (338 aa).

Residue 61–68 (TLGGTGKT) coordinates ATP.

Belongs to the LpxK family.

The enzyme catalyses a lipid A disaccharide + ATP = a lipid IVA + ADP + H(+). It participates in glycolipid biosynthesis; lipid IV(A) biosynthesis; lipid IV(A) from (3R)-3-hydroxytetradecanoyl-[acyl-carrier-protein] and UDP-N-acetyl-alpha-D-glucosamine: step 6/6. In terms of biological role, transfers the gamma-phosphate of ATP to the 4'-position of a tetraacyldisaccharide 1-phosphate intermediate (termed DS-1-P) to form tetraacyldisaccharide 1,4'-bis-phosphate (lipid IVA). In Nitrosococcus oceani (strain ATCC 19707 / BCRC 17464 / JCM 30415 / NCIMB 11848 / C-107), this protein is Tetraacyldisaccharide 4'-kinase.